We begin with the raw amino-acid sequence, 164 residues long: UPF0251 protein MA_0157 (164 aa).

A disordered region spans residues 91 to 124 (GDYRMPRGDGTGPAGQGPVGGGRSRGQGKGRGGR). Gly residues predominate over residues 99–115 (DGTGPAGQGPVGGGRSR).

This sequence belongs to the UPF0251 family.

The polypeptide is UPF0251 protein MA_0157 (Methanosarcina acetivorans (strain ATCC 35395 / DSM 2834 / JCM 12185 / C2A)).